A 118-amino-acid chain; its full sequence is MTSQSQGIQQLLQAEKRAKDKLDEAKKRKGKRLRQAKEEAVAETDQYRMQMEKDFRLKQAKIMGSQSHLSDEIEEQTLEKIKELNGSYNKCMESVIKQLLSMVCDMKPEVHVNYRATN.

The span at methionine 1 to leucine 12 shows a compositional bias: polar residues. A disordered region spans residues methionine 1 to threonine 44. The stretch at serine 5–lysine 53 forms a coiled coil. Residues alanine 14 to lysine 26 are compositionally biased toward basic and acidic residues.

This sequence belongs to the V-ATPase G subunit family. As to quaternary structure, V-ATPase is a heteromultimeric enzyme made up of two complexes: the ATP-hydrolytic V1 complex and the proton translocation V0 complex. The V1 complex consists of three catalytic AB heterodimers that form a heterohexamer, three peripheral stalks each consisting of EG heterodimers, one central rotor including subunits D and F, and the regulatory subunits C and H. The proton translocation complex V0 consists of the proton transport subunit a, a ring of proteolipid subunits c9c'', rotary subunit d, subunits e and f, and the accessory subunits ATP6AP1/Ac45 and ATP6AP2/PRR. As to expression, kidney.

Its function is as follows. Subunit of the V1 complex of vacuolar(H+)-ATPase (V-ATPase), a multisubunit enzyme composed of a peripheral complex (V1) that hydrolyzes ATP and a membrane integral complex (V0) that translocates protons. V-ATPase is responsible for acidifying and maintaining the pH of intracellular compartments and in some cell types, is targeted to the plasma membrane, where it is responsible for acidifying the extracellular environment. The sequence is that of V-type proton ATPase subunit G 3 (Atp6v1g3) from Mus musculus (Mouse).